The chain runs to 343 residues: 4-hydroxy-2-oxovalerate aldolase 4 (343 aa).

In terms of domain architecture, Pyruvate carboxyltransferase spans 8–260; sequence VTVHDMTLRD…ETGVDVAKIT (253 aa). 16–17 lines the substrate pocket; the sequence is RD. Residue D17 participates in Mn(2+) binding. The active-site Proton acceptor is H20. S170 and H199 together coordinate substrate. Residues H199 and H201 each contribute to the Mn(2+) site. Y290 lines the substrate pocket.

Belongs to the 4-hydroxy-2-oxovalerate aldolase family.

The catalysed reaction is (S)-4-hydroxy-2-oxopentanoate = acetaldehyde + pyruvate. This Dechloromonas aromatica (strain RCB) protein is 4-hydroxy-2-oxovalerate aldolase 4.